Here is a 340-residue protein sequence, read N- to C-terminus: Fructose-bisphosphate aldolase (340 aa).

A D-glyceraldehyde 3-phosphate-binding site is contributed by S53. Catalysis depends on D95, which acts as the Proton donor. 4 residues coordinate Zn(2+): H96, D131, E161, and H212. G213 is a binding site for dihydroxyacetone phosphate. Zn(2+) is bound at residue H249. Dihydroxyacetone phosphate-binding positions include 250–252 (GGS) and 271–274 (NLDT).

Belongs to the class II fructose-bisphosphate aldolase family. It depends on Zn(2+) as a cofactor.

The catalysed reaction is beta-D-fructose 1,6-bisphosphate = D-glyceraldehyde 3-phosphate + dihydroxyacetone phosphate. Its pathway is carbohydrate degradation; glycolysis; D-glyceraldehyde 3-phosphate and glycerone phosphate from D-glucose: step 4/4. Its function is as follows. Catalyzes the aldol condensation of dihydroxyacetone phosphate (DHAP or glycerone-phosphate) with glyceraldehyde 3-phosphate (G3P) to form fructose 1,6-bisphosphate (FBP) in gluconeogenesis and the reverse reaction in glycolysis. This Streptomyces galbus protein is Fructose-bisphosphate aldolase (fba).